Consider the following 406-residue polypeptide: Cysteine--tRNA ligase (406 aa).

Cysteine 16 lines the Zn(2+) pocket. A 'HIGH' region motif is present at residues 18-28 (PTVYSDVHIGN). Positions 192, 218, and 222 each coordinate Zn(2+). The 'KMSKS' region motif lies at 250 to 254 (KMAKS). Lysine 253 contacts ATP.

The protein belongs to the class-I aminoacyl-tRNA synthetase family. Monomer. It depends on Zn(2+) as a cofactor.

Its subcellular location is the cytoplasm. It catalyses the reaction tRNA(Cys) + L-cysteine + ATP = L-cysteinyl-tRNA(Cys) + AMP + diphosphate. The sequence is that of Cysteine--tRNA ligase from Mesomycoplasma hyopneumoniae (strain J / ATCC 25934 / NCTC 10110) (Mycoplasma hyopneumoniae).